Consider the following 541-residue polypeptide: Chaperonin GroEL (541 aa).

Residues 29 to 32, 86 to 90, Gly-413, 476 to 478, and Asp-492 each bind ATP; these read TLGP, DGTTT, and NAA.

Belongs to the chaperonin (HSP60) family. As to quaternary structure, forms a cylinder of 14 subunits composed of two heptameric rings stacked back-to-back. Interacts with the co-chaperonin GroES.

It is found in the cytoplasm. It carries out the reaction ATP + H2O + a folded polypeptide = ADP + phosphate + an unfolded polypeptide.. In terms of biological role, together with its co-chaperonin GroES, plays an essential role in assisting protein folding. The GroEL-GroES system forms a nano-cage that allows encapsulation of the non-native substrate proteins and provides a physical environment optimized to promote and accelerate protein folding. The protein is Chaperonin GroEL of Rhodococcus hoagii (Corynebacterium equii).